The primary structure comprises 323 residues: tRNA U34 carboxymethyltransferase (323 aa).

Residues Lys91, Trp105, Lys110, Gly130, 152 to 154 (DPT), 181 to 182 (IE), Met196, Tyr200, and Arg315 contribute to the carboxy-S-adenosyl-L-methionine site.

The protein belongs to the class I-like SAM-binding methyltransferase superfamily. CmoB family. As to quaternary structure, homotetramer.

The enzyme catalyses carboxy-S-adenosyl-L-methionine + 5-hydroxyuridine(34) in tRNA = 5-carboxymethoxyuridine(34) in tRNA + S-adenosyl-L-homocysteine + H(+). Functionally, catalyzes carboxymethyl transfer from carboxy-S-adenosyl-L-methionine (Cx-SAM) to 5-hydroxyuridine (ho5U) to form 5-carboxymethoxyuridine (cmo5U) at position 34 in tRNAs. This chain is tRNA U34 carboxymethyltransferase, found in Salmonella paratyphi B (strain ATCC BAA-1250 / SPB7).